A 90-amino-acid polypeptide reads, in one-letter code: uncharacterized protein (90 aa).

A signal peptide spans 1–18 (MKTLPVLVLSLTLLTVFS). The disordered stretch occupies residues 28–50 (QAKQLLRSRRQDRPSKPGFPDEP).

The protein resides in the secreted. This is an uncharacterized protein from Homo sapiens (Human).